A 464-amino-acid polypeptide reads, in one-letter code: mRNA capping enzyme LEF-4 (464 aa).

Residues 1–204 form an mRNA triphosphatase region; that stretch reads MDYGDFVIEK…NVMCNIIADM (204 aa). An mRNA guanylyltransferase region spans residues 205–464; that stretch reads EALTDAQNIS…KHRRDRIVPN (260 aa). The active-site N6-GMP-lysine intermediate is K255.

It belongs to the baculoviridae LEF-4 family. In terms of assembly, interacts with LEF-8, LEF-9, and p47.

It localises to the host cytoplasm. The protein localises to the host nucleus. The enzyme catalyses a 5'-end diphospho-ribonucleoside in mRNA + GTP + H(+) = a 5'-end (5'-triphosphoguanosine)-ribonucleoside in mRNA + diphosphate. It catalyses the reaction a 5'-end triphospho-ribonucleoside in mRNA + H2O = a 5'-end diphospho-ribonucleoside in mRNA + phosphate + H(+). Functionally, component of the viral DNA-dependent RNA polymerase that catalyzes two reactions involved in viral RNA cap formation: an RNA 5'-triphosphatase that hydrolyzes the gamma phosphate of triphosphate-terminated RNA and a guanylyltransferase that reacts with GTP to form a covalent protein-guanylate adduct. Therefore plays an essential role in late and very late gene expression. This chain is mRNA capping enzyme LEF-4 (LEF-4), found in Autographa californica nuclear polyhedrosis virus (AcMNPV).